A 175-amino-acid polypeptide reads, in one-letter code: ATP synthase subunit b (175 aa).

The helical transmembrane segment at 20-40 (LIFWTAITFVIVLLILKKIAW) threads the bilayer.

The protein belongs to the ATPase B chain family. F-type ATPases have 2 components, F(1) - the catalytic core - and F(0) - the membrane proton channel. F(1) has five subunits: alpha(3), beta(3), gamma(1), delta(1), epsilon(1). F(0) has four main subunits: a(1), b(2) and c(10-14). The alpha and beta chains form an alternating ring which encloses part of the gamma chain. F(1) is attached to F(0) by a central stalk formed by the gamma and epsilon chains, while a peripheral stalk is formed by the delta and b chains.

It is found in the cell inner membrane. F(1)F(0) ATP synthase produces ATP from ADP in the presence of a proton or sodium gradient. F-type ATPases consist of two structural domains, F(1) containing the extramembraneous catalytic core and F(0) containing the membrane proton channel, linked together by a central stalk and a peripheral stalk. During catalysis, ATP synthesis in the catalytic domain of F(1) is coupled via a rotary mechanism of the central stalk subunits to proton translocation. Functionally, component of the F(0) channel, it forms part of the peripheral stalk, linking F(1) to F(0). The chain is ATP synthase subunit b from Chlorobium chlorochromatii (strain CaD3).